The primary structure comprises 390 residues: Protein DDI1 homolog (390 aa).

Aspartate 205 is a catalytic residue. Positions 322-344 are disordered; it reads MHAPRHQDPATTATTASNPAAPV. Residues 330 to 343 show a composition bias toward low complexity; the sequence is PATTATTASNPAAP.

This sequence belongs to the DDI1 family.

It localises to the cytoplasm. Its activity is regulated as follows. Inhibited by pepstatin, diazoacetyl-DL-norleucine methyl ester (DAN) and nelfinavir. Inhibited by the proteinase inhibitors lopinavir and ritonavir. Its function is as follows. Aspartic protease. The polypeptide is Protein DDI1 homolog (Leishmania major).